A 211-amino-acid chain; its full sequence is Pyridoxine/pyridoxamine 5'-phosphate oxidase (211 aa).

Residues 7–10 (RREY) and Lys-65 contribute to the substrate site. Residues 60-65 (RIVLLK), 75-76 (YT), Arg-81, Lys-82, and Gln-104 contribute to the FMN site. Residues Tyr-122, Arg-126, and Ser-130 each contribute to the substrate site. FMN contacts are provided by residues 139–140 (QS) and Trp-184. Residue 190-192 (RLH) coordinates substrate. Arg-194 serves as a coordination point for FMN.

Belongs to the pyridoxamine 5'-phosphate oxidase family. In terms of assembly, homodimer. Requires FMN as cofactor.

It carries out the reaction pyridoxamine 5'-phosphate + O2 + H2O = pyridoxal 5'-phosphate + H2O2 + NH4(+). The catalysed reaction is pyridoxine 5'-phosphate + O2 = pyridoxal 5'-phosphate + H2O2. It participates in cofactor metabolism; pyridoxal 5'-phosphate salvage; pyridoxal 5'-phosphate from pyridoxamine 5'-phosphate: step 1/1. The protein operates within cofactor metabolism; pyridoxal 5'-phosphate salvage; pyridoxal 5'-phosphate from pyridoxine 5'-phosphate: step 1/1. In terms of biological role, catalyzes the oxidation of either pyridoxine 5'-phosphate (PNP) or pyridoxamine 5'-phosphate (PMP) into pyridoxal 5'-phosphate (PLP). The sequence is that of Pyridoxine/pyridoxamine 5'-phosphate oxidase from Vibrio cholerae serotype O1 (strain ATCC 39541 / Classical Ogawa 395 / O395).